Consider the following 44-residue polypeptide: Photosystem I reaction center subunit IX (44 aa).

A helical transmembrane segment spans residues 7 to 27; sequence YLSVAPVLSTLSLGFLTGFLI.

This sequence belongs to the PsaJ family.

The protein resides in the plastid membrane. Functionally, may help in the organization of the PsaE and PsaF subunits. The protein is Photosystem I reaction center subunit IX of Cuscuta gronovii (Common dodder).